Here is a 465-residue protein sequence, read N- to C-terminus: Ribulose bisphosphate carboxylase large chain (465 aa).

N6,N6,N6-trimethyllysine is present on Lys4. Positions 113 and 163 each coordinate substrate. Lys165 (proton acceptor) is an active-site residue. Lys167 provides a ligand contact to substrate. Mg(2+) contacts are provided by Lys191, Asp193, and Glu194. The residue at position 191 (Lys191) is an N6-carboxylysine. His284 serves as the catalytic Proton acceptor. Arg285, His317, and Ser369 together coordinate substrate.

The protein belongs to the RuBisCO large chain family. Type I subfamily. Heterohexadecamer of 8 large chains and 8 small chains; disulfide-linked. The disulfide link is formed within the large subunit homodimers. It depends on Mg(2+) as a cofactor. In terms of processing, the disulfide bond which can form in the large chain dimeric partners within the hexadecamer appears to be associated with oxidative stress and protein turnover.

The protein resides in the plastid. It is found in the chloroplast. It carries out the reaction 2 (2R)-3-phosphoglycerate + 2 H(+) = D-ribulose 1,5-bisphosphate + CO2 + H2O. It catalyses the reaction D-ribulose 1,5-bisphosphate + O2 = 2-phosphoglycolate + (2R)-3-phosphoglycerate + 2 H(+). Its function is as follows. RuBisCO catalyzes two reactions: the carboxylation of D-ribulose 1,5-bisphosphate, the primary event in carbon dioxide fixation, as well as the oxidative fragmentation of the pentose substrate in the photorespiration process. Both reactions occur simultaneously and in competition at the same active site. This Securidaca diversifolia (Easter flower) protein is Ribulose bisphosphate carboxylase large chain.